A 238-amino-acid polypeptide reads, in one-letter code: Bacterial microcompartment shell protein PduB (238 aa).

BMC circularly permuted domains follow at residues 14–125 (FVGA…VYNA) and 126–225 (KAGH…LSQF). Residues Cys158 and Cys197 are joined by a disulfide bond.

It belongs to the EutL/PduB family. In terms of assembly, homotrimerizes to form a pseudohexamer with a central pore 7.5 Angstroms wide and 22 Angstroms long; the pore channel in the crystal binds up to 4 glycerol molecules. A disulfide bond forms in the pore, it is not clear if this is an artifact. The trimers pack into an array.

It localises to the bacterial microcompartment. It participates in polyol metabolism; 1,2-propanediol degradation. One of the major shell proteins of the bacterial microcompartment (BMC) dedicated to 1,2-propanediol (1,2-PD) degradation. Probably involved in a propanediol fermentation/reuterin formation pathway. This Limosilactobacillus reuteri (strain DSM 20016) (Lactobacillus reuteri) protein is Bacterial microcompartment shell protein PduB.